The primary structure comprises 572 residues: Frizzled-7 (572 aa).

Residues 1–32 form the signal peptide; the sequence is MRGPGTAASHSPLGLCALVLALLGALPTDTRA. Topologically, residues 33–254 are extracellular; that stretch reads QPYHGEKGIS…EEERRFARLW (222 aa). Residues 44-163 form the FZ domain; that stretch reads PDHGFCQPIS…HGAGEICVGQ (120 aa). Disulfide bonds link cysteine 49/cysteine 110, cysteine 57/cysteine 103, cysteine 94/cysteine 131, cysteine 120/cysteine 160, and cysteine 124/cysteine 148. Asparagine 63 is a glycosylation site (N-linked (GlcNAc...) asparagine). Asparagine 164 is a glycosylation site (N-linked (GlcNAc...) asparagine). The helical transmembrane segment at 255–275 threads the bilayer; it reads VGVWSVLCCASTLFTVLTYLV. Over 276–286 the chain is Cytoplasmic; sequence DMRRFSYPERP. A helical membrane pass occupies residues 287-307; it reads IIFLSGCYFMVAVAHVAGFLL. Residues 308-334 are Extracellular-facing; that stretch reads EDRAVCVERFSDDGYRTVAQGTKKEGC. The chain crosses the membrane as a helical span at residues 335–355; the sequence is TILFMVLYFFGMASSIWWVIL. The Cytoplasmic segment spans residues 356-377; that stretch reads SLTWFLAAGMKWGHEAIEANSQ. A helical membrane pass occupies residues 378 to 398; sequence YFHLAAWAVPAVKTITILAMG. At 399–421 the chain is on the extracellular side; sequence QVDGDLLSGVCYVGLSSVDALRG. The helical transmembrane segment at 422–442 threads the bilayer; that stretch reads FVLAPLFVYLFIGTSFLLAGF. The Cytoplasmic segment spans residues 443–468; sequence VSLFRIRTIMKHDGTKTEKLEKLMVR. The helical transmembrane segment at 469–489 threads the bilayer; sequence IGVFSVLYTVPATIVLACYFY. The Extracellular portion of the chain corresponds to 490-526; it reads EQAFREHWERTWLLQTCKSYAVPCPPGHFSPMSPDFT. A helical transmembrane segment spans residues 527–547; it reads VFMIKYLMTMIVGITTGFWIW. Over 548 to 572 the chain is Cytoplasmic; that stretch reads SGKTLQSWRRFYHRLSHSSKGETAV. Residues 550–555 carry the Lys-Thr-X-X-X-Trp motif, mediates interaction with the PDZ domain of Dvl family members motif; sequence KTLQSW. Residues 570 to 572 carry the PDZ-binding motif; sequence TAV.

The protein belongs to the G-protein coupled receptor Fz/Smo family. As to quaternary structure, interacts with MAGI3. Interacts with DVL1. Interacts with CCDC88C/DAPLE; the interaction displaces DVL1 from FZD7, leading to inhibition of canonical Wnt signaling and triggering of non-canonical Wnt responses. Interacts with MYOC. Binds to SDCBP; this interaction is increased by inositol trisphosphate (IP3). Interacts with glypican GPC3. In terms of processing, ubiquitinated by ZNRF3, leading to its degradation by the proteasome.

The protein localises to the cell membrane. It localises to the endosome membrane. Its function is as follows. Receptor for Wnt proteins. Most frizzled receptors are coupled to the beta-catenin canonical signaling pathway, which leads to the activation of disheveled proteins, inhibition of GSK-3 kinase, nuclear accumulation of beta-catenin and activation of Wnt target genes. A second signaling pathway involving PKC and calcium fluxes has been seen for some family members, but it is not yet clear if it represents a distinct pathway or if it can be integrated in the canonical pathway, as PKC seems to be required for Wnt-mediated inactivation of GSK-3 kinase. Both pathways seem to involve interactions with G-proteins. Activation by WNT8 induces expression of beta-catenin target genes. Following ligand activation, binds to CCDC88C/DAPLE which displaces DVL1 from FZD7 and leads to inhibition of canonical Wnt signaling, activation of G-proteins by CCDC88C and triggering of non-canonical Wnt responses. May be involved in transduction and intercellular transmission of polarity information during tissue morphogenesis and/or in differentiated tissues. The polypeptide is Frizzled-7 (Fzd7) (Mus musculus (Mouse)).